The sequence spans 438 residues: GDP-mannose 6-dehydrogenase (438 aa).

Residues tyrosine 10, valine 11, aspartate 30, lysine 35, threonine 86, and threonine 124 each coordinate NAD(+). The GDP-alpha-D-mannuronate site is built by glutamate 161, lysine 210, asparagine 214, histidine 217, asparagine 225, tyrosine 256, tyrosine 257, arginine 259, phenylalanine 262, and glycine 265. Cysteine 268 is a catalytic residue. Lysine 271 serves as a coordination point for NAD(+). GDP-alpha-D-mannuronate is bound at residue lysine 324. Position 331 (arginine 331) interacts with NAD(+).

This sequence belongs to the UDP-glucose/GDP-mannose dehydrogenase family.

The enzyme catalyses GDP-alpha-D-mannose + 2 NAD(+) + H2O = GDP-alpha-D-mannuronate + 2 NADH + 3 H(+). Its pathway is glycan biosynthesis; alginate biosynthesis. Catalyzes the oxidation of guanosine diphospho-D-mannose (GDP-D-mannose) to GDP-D-mannuronic acid, a precursor for alginate polymerization. The alginate layer causes a mucoid phenotype and provides a protective barrier against host immune defenses and antibiotics. This is GDP-mannose 6-dehydrogenase (algD) from Pseudomonas syringae pv. syringae.